Consider the following 105-residue polypeptide: Met repressor (105 aa).

This sequence belongs to the MetJ family. Homodimer.

The protein resides in the cytoplasm. This regulatory protein, when combined with SAM (S-adenosylmethionine) represses the expression of the methionine regulon and of enzymes involved in SAM synthesis. This chain is Met repressor, found in Yersinia pestis bv. Antiqua (strain Antiqua).